Here is a 265-residue protein sequence, read N- to C-terminus: 2-Cys peroxiredoxin BAS1, chloroplastic (265 aa).

Residues 1-65 (MACVASSTTL…SSTSRRSFAV (65 aa)) constitute a chloroplast transit peptide. One can recognise a Thioredoxin domain in the interval 73 to 232 (PLVGNKAPDF…TMRTLQALQY (160 aa)). The Cysteine sulfenic acid (-SOH) intermediate role is filled by cysteine 119.

Belongs to the peroxiredoxin family. AhpC/Prx1 subfamily. As to quaternary structure, homodimer; disulfide-linked, upon oxidation.

Its subcellular location is the plastid. The protein localises to the chloroplast. It carries out the reaction a hydroperoxide + [thioredoxin]-dithiol = an alcohol + [thioredoxin]-disulfide + H2O. Thiol-specific peroxidase that catalyzes the reduction of hydrogen peroxide and organic hydroperoxides to water and alcohols, respectively. Plays a role in cell protection against oxidative stress by detoxifying peroxides. May be an antioxidant enzyme particularly in the developing shoot and photosynthesizing leaf. The sequence is that of 2-Cys peroxiredoxin BAS1, chloroplastic (BAS1) from Spinacia oleracea (Spinach).